A 340-amino-acid polypeptide reads, in one-letter code: Thioesterase pkgB (340 aa).

Zn(2+)-binding residues include histidine 97, histidine 99, aspartate 101, histidine 102, and histidine 205. The Proton donor/acceptor role is filled by aspartate 101. A compositionally biased stretch (low complexity) spans 242-258; the sequence is SSRNGGSTSSIGSVSES. The disordered stretch occupies residues 242 to 271; it reads SSRNGGSTSSIGSVSESGDSDEEDNNMKTS.

This sequence belongs to the metallo-beta-lactamase superfamily. It depends on Zn(2+) as a cofactor.

It carries out the reaction 3,5,7,9,11,13-hexaoxotetradecanoyl-[ACP] = dehydrocitreoisocoumarin + holo-[ACP] + H2O. It catalyses the reaction 3,5,7,9,11-pentaoxododecanoyl-[ACP] = 6,8-dihydroxy-3-(2-oxopropyl)-isocoumarin + holo-[ACP] + H2O. Functionally, thioesterase; part of the pkg gene cluster that mediates the biosynthesis of dihydrocitreoisocoumarin and 6,8-dihydroxy-3-(2-oxopropyl)-isocoumarin. The non-reducing polyketide synthase pkgA performs the condensation of one acetyl-CoA starter unit with 6 and 5 malonyl-CoA units, respectively. As pkgA lacks a releasing domain, the thioesterase pkgB is necessary to break the thioester bond and release dihydrocitreoisocoumarin and 6,8-dihydroxy-3-(2-oxopropyl)-isocoumarin from pkgA. The protein is Thioesterase pkgB of Emericella nidulans (strain FGSC A4 / ATCC 38163 / CBS 112.46 / NRRL 194 / M139) (Aspergillus nidulans).